Consider the following 1183-residue polypeptide: Phospholipid-transporting ATPase FetA (1183 aa).

A run of 3 helical transmembrane segments spans residues 96–116 (ISSLAWYTTVIPLIVVLSITG), 299–319 (VLVVWIFMFLGGMCFLLSIGH), and 348–368 (ALIFWSYFIVLNTMVPISLYV). Residue aspartate 416 is the 4-aspartylphosphate intermediate of the active site. ATP-binding residues include aspartate 416, lysine 417, threonine 418, glutamate 519, phenylalanine 560, lysine 583, arginine 617, threonine 697, glycine 698, aspartate 699, arginine 812, and lysine 818. Aspartate 416 contributes to the Mg(2+) binding site. Threonine 418 is a Mg(2+) binding site. Aspartate 838 provides a ligand contact to Mg(2+). ATP contacts are provided by asparagine 841 and aspartate 842. Aspartate 842 lines the Mg(2+) pocket. Helical transmembrane passes span 904 to 924 (FAFTLVHFWYAFFNGFSAQTV), 927 to 947 (IWFITFYNLIYTSLPVLGLSL), 981 to 1001 (CLLHGIYNSFVLFFVPMGTVF), 1014 to 1034 (FQSFSLLVQTTLIGVMTMQIA), 1049 to 1069 (WGSLGLYFCILILLCSDGLCL), and 1090 to 1110 (IWLCLILSTILCMIPLIGYNF).

The protein belongs to the cation transport ATPase (P-type) (TC 3.A.3) family. Type IV subfamily. It depends on Mg(2+) as a cofactor. In terms of tissue distribution, highly expressed in testis.

Its subcellular location is the cytoplasmic vesicle. The protein resides in the secretory vesicle. It is found in the acrosome membrane. It carries out the reaction ATP + H2O + phospholipidSide 1 = ADP + phosphate + phospholipidSide 2.. Its function is as follows. P4-ATPase flippase which catalyzes the hydrolysis of ATP coupled to the transport of aminophospholipids from the outer to the inner leaflet of various membranes and ensures the maintenance of asymmetric distribution of phospholipids. Phospholipid translocation also seems to be implicated in vesicle formation and in uptake of lipid signaling molecules. May play a role in phospholid transport across membranes and in acrosome formation. The sequence is that of Phospholipid-transporting ATPase FetA (Atp8b5) from Mus musculus (Mouse).